Consider the following 888-residue polypeptide: Alanine--tRNA ligase (888 aa).

Zn(2+) contacts are provided by His-571, His-575, Cys-674, and His-678.

The protein belongs to the class-II aminoacyl-tRNA synthetase family. Requires Zn(2+) as cofactor.

The protein localises to the cytoplasm. The enzyme catalyses tRNA(Ala) + L-alanine + ATP = L-alanyl-tRNA(Ala) + AMP + diphosphate. Catalyzes the attachment of alanine to tRNA(Ala) in a two-step reaction: alanine is first activated by ATP to form Ala-AMP and then transferred to the acceptor end of tRNA(Ala). Also edits incorrectly charged Ser-tRNA(Ala) and Gly-tRNA(Ala) via its editing domain. This chain is Alanine--tRNA ligase, found in Nocardia farcinica (strain IFM 10152).